The following is a 252-amino-acid chain: Hydroxyacylglutathione hydrolase (252 aa).

The Zn(2+) site is built by His-54, His-56, Asp-58, His-59, His-111, Asp-128, and His-166.

Belongs to the metallo-beta-lactamase superfamily. Glyoxalase II family. Monomer. The cofactor is Zn(2+).

It carries out the reaction an S-(2-hydroxyacyl)glutathione + H2O = a 2-hydroxy carboxylate + glutathione + H(+). Its pathway is secondary metabolite metabolism; methylglyoxal degradation; (R)-lactate from methylglyoxal: step 2/2. In terms of biological role, thiolesterase that catalyzes the hydrolysis of S-D-lactoyl-glutathione to form glutathione and D-lactic acid. The chain is Hydroxyacylglutathione hydrolase from Photobacterium profundum (strain SS9).